We begin with the raw amino-acid sequence, 423 residues long: Glutamyl-tRNA(Gln) amidotransferase subunit A (423 aa).

The interval 1–20 (MSHNAFITEETIEPTDDGPL) is disordered. Over residues 10–19 (ETIEPTDDGP) the composition is skewed to acidic residues. Catalysis depends on charge relay system residues K28 and S103. Residues 75–108 (EFGMGTTTETSAFGPTENPAAEGRVPGGSSGGSA) are disordered. The Acyl-ester intermediate role is filled by S127. The segment at 183–206 (DERDGTTREPPAGQPTYADAADGD) is disordered.

It belongs to the amidase family. GatA subfamily. Heterotrimer of A, B and C subunits.

The catalysed reaction is L-glutamyl-tRNA(Gln) + L-glutamine + ATP + H2O = L-glutaminyl-tRNA(Gln) + L-glutamate + ADP + phosphate + H(+). Its function is as follows. Allows the formation of correctly charged Gln-tRNA(Gln) through the transamidation of misacylated Glu-tRNA(Gln) in organisms which lack glutaminyl-tRNA synthetase. The reaction takes place in the presence of glutamine and ATP through an activated gamma-phospho-Glu-tRNA(Gln). The chain is Glutamyl-tRNA(Gln) amidotransferase subunit A from Natronomonas pharaonis (strain ATCC 35678 / DSM 2160 / CIP 103997 / JCM 8858 / NBRC 14720 / NCIMB 2260 / Gabara) (Halobacterium pharaonis).